The sequence spans 384 residues: Erythronate-4-phosphate dehydrogenase (384 aa).

2 residues coordinate substrate: S45 and T66. Residues D147 and T177 each coordinate NAD(+). R210 is a catalytic residue. D234 contacts NAD(+). E239 is a catalytic residue. Residue H256 is the Proton donor of the active site. NAD(+) is bound at residue G259. Y260 serves as a coordination point for substrate.

Belongs to the D-isomer specific 2-hydroxyacid dehydrogenase family. PdxB subfamily. In terms of assembly, homodimer.

It is found in the cytoplasm. The enzyme catalyses 4-phospho-D-erythronate + NAD(+) = (R)-3-hydroxy-2-oxo-4-phosphooxybutanoate + NADH + H(+). It participates in cofactor biosynthesis; pyridoxine 5'-phosphate biosynthesis; pyridoxine 5'-phosphate from D-erythrose 4-phosphate: step 2/5. Catalyzes the oxidation of erythronate-4-phosphate to 3-hydroxy-2-oxo-4-phosphonooxybutanoate. The chain is Erythronate-4-phosphate dehydrogenase from Marinobacter nauticus (strain ATCC 700491 / DSM 11845 / VT8) (Marinobacter aquaeolei).